Reading from the N-terminus, the 908-residue chain is Protein O-mannosyltransferase 1 (908 aa).

Disordered regions lie at residues 1–85 and 115–160; these read MYNN…SAIN and GSVE…SGSR. The segment covering 21-31 has biased composition (basic residues); that stretch reads QRRKTTTRSRS. Composition is skewed to polar residues over residues 39-54 and 132-149; these read CTSE…NGAQ and LTAT…SPTI. A helical transmembrane segment spans residues 190 to 210; it reads FTVNLSIDLFSWTLFLLAFCT. N-linked (GlcNAc...) asparagine glycosylation is present at N265. 5 helical membrane-spanning segments follow: residues 279–299, 311–328, 331–351, 370–390, and 418–438; these read VPIF…APAV, WAAA…SLLT, RFVL…ACLL, AGVL…ALAL, and LSRL…VFYV. MIR domains lie at 473-534, 545-602, and 608-664; these read PLAV…VKRP, PDVI…VEIL, and GDSW…VEEH. The next 4 helical transmembrane spans lie at 749 to 769, 788 to 808, 813 to 833, and 857 to 877; these read VLIW…LAFY, FLMA…PYYF, LFLH…CFVV, and LALL…LPLS.

It belongs to the glycosyltransferase 39 family. In terms of assembly, interacts with tw/POMT2.

Its subcellular location is the endoplasmic reticulum membrane. It carries out the reaction a di-trans,poly-cis-dolichyl beta-D-mannosyl phosphate + L-seryl-[protein] = 3-O-(alpha-D-mannosyl)-L-seryl-[protein] + a di-trans,poly-cis-dolichyl phosphate + H(+). The enzyme catalyses a di-trans,poly-cis-dolichyl beta-D-mannosyl phosphate + L-threonyl-[protein] = 3-O-(alpha-D-mannosyl)-L-threonyl-[protein] + a di-trans,poly-cis-dolichyl phosphate + H(+). The protein operates within protein modification; protein glycosylation. Functionally, rt/POMT1 and tw/POMT2 function as a protein O-mannosyltransferase in association with each other to generate and maintain normal muscle development. This is Protein O-mannosyltransferase 1 from Drosophila pseudoobscura pseudoobscura (Fruit fly).